A 95-amino-acid chain; its full sequence is Embryonic abundant protein 1 (95 aa).

Positions Met-1–Arg-10 are enriched in polar residues. The tract at residues Met-1–Ser-95 is disordered. 2 stretches are compositionally biased toward basic and acidic residues: residues Ala-40 to Arg-64 and Gly-75 to Ser-95.

This sequence belongs to the small hydrophilic plant seed protein family. In terms of tissue distribution, expressed in dry seeds and immature embryos.

In terms of biological role, em protein may act as a cytoplasm protectant during desiccation. In Oryza sativa subsp. japonica (Rice), this protein is Embryonic abundant protein 1 (EMP1).